Here is an 84-residue protein sequence, read N- to C-terminus: M-myrmeciitoxin-Mb2a (84 aa).

The N-terminal stretch at Met-1–Ala-21 is a signal peptide. A propeptide spanning residues Pro-22–Pro-48 is cleaved from the precursor.

This sequence belongs to the formicidae venom precursor-01 superfamily. Ant pilosulin family. In terms of tissue distribution, expressed by the venom gland.

The protein resides in the secreted. Shows activity against E.coli and S.aureus (MIC&lt;6.25 uM), moderate activity against P.aeruginosa (MIC&lt;25 uM), weak activity against B.subtilis (MIC&lt;50 uM), and has no effect against L.garvieae, C.albicans, and S.cerevisiae. Has no hemolytic nor cytolytic activity. Causes an IgE-independent histamine release. The protein is M-myrmeciitoxin-Mb2a of Myrmecia banksi (Jack jumper ant).